Here is a 453-residue protein sequence, read N- to C-terminus: Cytochrome P450 monooxygenase PC-20 (453 aa).

Transmembrane regions (helical) follow at residues 5 to 25 and 49 to 69; these read LGPFRTFTLLTVGLLLSLCVI and LGVVLAEILASPEGFFHLFCV. Position 387 (Cys387) interacts with heme.

The protein belongs to the cytochrome P450 family. Heme serves as cofactor.

The protein localises to the membrane. It functions in the pathway secondary metabolite biosynthesis. Cytochrome P450 monooxygenase; part of the gene cluster that mediates the biosynthesis of the indole diterpenes penitrems. The geranylgeranyl diphosphate (GGPP) synthase penG catalyzes the first step in penitrem biosynthesis via conversion of farnesyl pyrophosphate and isopentyl pyrophosphate into geranylgeranyl pyrophosphate (GGPP). Condensation of indole-3-glycerol phosphate with GGPP by the prenyl transferase penC then forms 3-geranylgeranylindole (3-GGI). Epoxidation by the FAD-dependent monooxygenase penM leads to a epoxidized-GGI that is substrate of the terpene cyclase penB for cyclization to yield paspaline. Paspaline is subsequently converted to 13-desoxypaxilline by the cytochrome P450 monooxygenase penP, the latter being then converted to paxilline by the cytochrome P450 monooxygenase penQ. Paxilline is converted to beta-paxitriol via C-10 ketoreduction by the short-chain dehydrogenase PC-15 which can be monoprenylated at the C-20 by the indole diterpene prenyltransferase penD. A two-step elimination (acetylation and elimination) process performed by the O-acetyltransferase PC-16 and the P.simplicissimum ptmI-ortholog not yet identified in P.crustosum, leads to the production of the prenylated form of penijanthine. The FAD-linked oxidoreductase ptmO then converts the prenylated form of penijanthine into PC-M5 which is in turn transformed into PC-M4 by the aromatic dimethylallyltransferase PC-22. A series of oxidation steps involving 4 cytochrome P450 monooxygenases (PC-21, PC-05, PC-23, PC-20) and a FAD-dependent monooxygenase (PC-14) are required for the transformation of PC-M4 to penitrems A and E. Synthesis of these final products is proposed to proceed via penitrems D and C (PC-21, PC-05, PC-14) and penitrems B and F (PC-21, PC-05, PC-14, PC-23). The protein is Cytochrome P450 monooxygenase PC-20 of Penicillium crustosum (Blue mold fungus).